A 271-amino-acid polypeptide reads, in one-letter code: Tryptophan synthase alpha chain (271 aa).

Residues Glu-49 and Asp-60 each act as proton acceptor in the active site.

It belongs to the TrpA family. In terms of assembly, tetramer of two alpha and two beta chains.

It carries out the reaction (1S,2R)-1-C-(indol-3-yl)glycerol 3-phosphate + L-serine = D-glyceraldehyde 3-phosphate + L-tryptophan + H2O. It functions in the pathway amino-acid biosynthesis; L-tryptophan biosynthesis; L-tryptophan from chorismate: step 5/5. The alpha subunit is responsible for the aldol cleavage of indoleglycerol phosphate to indole and glyceraldehyde 3-phosphate. The chain is Tryptophan synthase alpha chain from Aromatoleum aromaticum (strain DSM 19018 / LMG 30748 / EbN1) (Azoarcus sp. (strain EbN1)).